The chain runs to 102 residues: Large ribosomal subunit protein P1 (102 aa).

The disordered stretch occupies residues 69–91 (APAAAAEEKKEEEKKEEKKEEDT). Over residues 74–90 (AEEKKEEEKKEEKKEED) the composition is skewed to basic and acidic residues.

It belongs to the eukaryotic ribosomal protein P1/P2 family. Part of the 50S ribosomal subunit. Homodimer, it forms part of the ribosomal stalk which helps the ribosome interact with GTP-bound translation factors. Forms a heptameric uL10/P0(P1)2(P1)2(P1)2 complex, where uL10/P0 forms an elongated spine to which the P1 dimers bind in a sequential fashion.

Its function is as follows. Forms part of the ribosomal stalk, playing a central role in the interaction of the ribosome with GTP-bound translation factors. This is Large ribosomal subunit protein P1 from Methanocaldococcus jannaschii (strain ATCC 43067 / DSM 2661 / JAL-1 / JCM 10045 / NBRC 100440) (Methanococcus jannaschii).